The sequence spans 114 residues: MANVYDTANQMAADIKTTQEFQDLKKAFDLLKLDTVAYGLFQQFQQKQYEMQQKSMQGQDFTDDEVKSLQELGDKMRDIQPIQNLMAKEQGLSQMMDELNKIISQPIIDVYQGK.

This sequence belongs to the UPF0342 family.

This is UPF0342 protein LCABL_19440 from Lacticaseibacillus casei (strain BL23) (Lactobacillus casei).